A 148-amino-acid chain; its full sequence is Single-stranded DNA-binding protein, mitochondrial (148 aa).

A mitochondrion-targeting transit peptide spans 1–16 (MFRRPVVQVLRQFVRH). Residues 30 to 141 (LNRVQLLGRV…IIADNIIFLS (112 aa)) enclose the SSB domain. A phosphoserine mark is found at Ser-67 and Ser-79. An N6-acetyllysine modification is found at Lys-113. Lys-122 is modified (N6-succinyllysine).

In terms of assembly, homotetramer. Interacts with MPG/AAG, through inhibition of its glycosylase activity it potentially prevents formation of DNA breaks in ssDNA, ensuring that base removal primarily occurs in dsDNA. Interacts with POLDIP2. Interacts with PRIMPOL.

The protein localises to the mitochondrion. Its subcellular location is the mitochondrion matrix. The protein resides in the mitochondrion nucleoid. In terms of biological role, binds preferentially and cooperatively to pyrimidine rich single-stranded DNA (ss-DNA). In vitro, required to maintain the copy number of mitochondrial DNA (mtDNA) and plays a crucial role during mtDNA replication by stimulating the activity of the replisome components POLG and TWNK at the replication fork. Promotes the activity of the gamma complex polymerase POLG, largely by organizing the template DNA and eliminating secondary structures to favor ss-DNA conformations that facilitate POLG activity. In addition it is able to promote the 5'-3' unwinding activity of the mtDNA helicase TWNK. May also function in mtDNA repair. This Bos taurus (Bovine) protein is Single-stranded DNA-binding protein, mitochondrial (SSBP1).